The sequence spans 231 residues: Large ribosomal subunit protein uL1 (231 aa).

This sequence belongs to the universal ribosomal protein uL1 family. As to quaternary structure, part of the 50S ribosomal subunit.

Its function is as follows. Binds directly to 23S rRNA. The L1 stalk is quite mobile in the ribosome, and is involved in E site tRNA release. Protein L1 is also a translational repressor protein, it controls the translation of the L11 operon by binding to its mRNA. This is Large ribosomal subunit protein uL1 from Thioalkalivibrio sulfidiphilus (strain HL-EbGR7).